The sequence spans 403 residues: Prostaglandin E2 receptor EP1 subtype (403 aa).

Residues 1 to 38 lie on the Extracellular side of the membrane; it reads MSLCGPLNLSLAGEATPCAEPGAPNASAWPPSGRASAS. N8 and N25 each carry an N-linked (GlcNAc...) asparagine glycan. Residues 39 to 65 traverse the membrane as a helical segment; the sequence is PALPIFSMTLGAVSNVLALALLAQAAG. Over 66–75 the chain is Cytoplasmic; sequence RLRRRRSAAT. Residues 76 to 99 traverse the membrane as a helical segment; that stretch reads FLLFVASLLATDLAGHVIPGALVL. Topologically, residues 100–114 are extracellular; sequence RLYAAGRSPAGGACH. C113 and C191 are disulfide-bonded. The chain crosses the membrane as a helical span at residues 115 to 136; it reads FLGGCMVFFGLCPLLLGCGMAV. The Cytoplasmic segment spans residues 137–158; that stretch reads ERCVGVTRPLLHAARVSAARAR. A helical membrane pass occupies residues 159-180; the sequence is LALAVLAALALAVALLPLARVG. The Extracellular segment spans residues 181 to 204; it reads RYELQYPGTWCFIGLRPAGGWRQA. A helical membrane pass occupies residues 205-230; sequence LLAGLFAGLGLAALLAALVCNTLSGL. Residues 231–295 lie on the Cytoplasmic side of the membrane; the sequence is ALLRARWRRR…ARRARAHDVE (65 aa). A disordered region spans residues 243–287; it reads RRRPQACGPDGRRHWGARAPRSASASSSSSVASVPGGSPGRGSAR. The segment covering 259 to 278 has biased composition (low complexity); the sequence is ARAPRSASASSSSSVASVPG. A helical transmembrane segment spans residues 296-322; the sequence is MVGQLVGIMVVSCICWSPLLVLVVLAV. Over 323–333 the chain is Extracellular; that stretch reads GGWGSSSLQRP. The chain crosses the membrane as a helical span at residues 334-355; that stretch reads LFLAVRLASWNQILDPWVYILL. The Cytoplasmic portion of the chain corresponds to 356–403; sequence RQAVLRQLLRLLPPRPGAKGSPAGLALTRSAWEASSLRSSRHSSLSHL.

It belongs to the G-protein coupled receptor 1 family.

The protein localises to the cell membrane. Its function is as follows. Receptor for prostaglandin E2 (PGE2). The activity of this receptor is mediated by G(q) proteins which activate a phosphatidylinositol-calcium second messenger system. May play a role as an important modulator of renal function. Implicated the smooth muscle contractile response to PGE2 in various tissues. This chain is Prostaglandin E2 receptor EP1 subtype (PTGER1), found in Canis lupus familiaris (Dog).